The following is a 102-amino-acid chain: Citrate lyase acyl carrier protein (102 aa).

The residue at position 14 (serine 14) is an O-(phosphoribosyl dephospho-coenzyme A)serine.

It belongs to the CitD family. As to quaternary structure, oligomer with a subunit composition of (alpha,beta,gamma)6.

It is found in the cytoplasm. Its function is as follows. Covalent carrier of the coenzyme of citrate lyase. The polypeptide is Citrate lyase acyl carrier protein (Serratia proteamaculans (strain 568)).